Consider the following 144-residue polypeptide: ATP synthase epsilon chain (144 aa).

Belongs to the ATPase epsilon chain family. F-type ATPases have 2 components, CF(1) - the catalytic core - and CF(0) - the membrane proton channel. CF(1) has five subunits: alpha(3), beta(3), gamma(1), delta(1), epsilon(1). CF(0) has three main subunits: a, b and c.

Its subcellular location is the cell inner membrane. In terms of biological role, produces ATP from ADP in the presence of a proton gradient across the membrane. This Hydrogenovibrio crunogenus (strain DSM 25203 / XCL-2) (Thiomicrospira crunogena) protein is ATP synthase epsilon chain.